A 109-amino-acid chain; its full sequence is uncharacterized protein (109 aa).

This is an uncharacterized protein from Bos taurus (Bovine).